Reading from the N-terminus, the 158-residue chain is Cyclic pyranopterin monophosphate synthase (158 aa).

Substrate is bound by residues L75–H77 and M113–E114. The active site involves D128.

It belongs to the MoaC family. In terms of assembly, homohexamer; trimer of dimers.

It carries out the reaction (8S)-3',8-cyclo-7,8-dihydroguanosine 5'-triphosphate = cyclic pyranopterin phosphate + diphosphate. The protein operates within cofactor biosynthesis; molybdopterin biosynthesis. Its function is as follows. Catalyzes the conversion of (8S)-3',8-cyclo-7,8-dihydroguanosine 5'-triphosphate to cyclic pyranopterin monophosphate (cPMP). In Ralstonia nicotianae (strain ATCC BAA-1114 / GMI1000) (Ralstonia solanacearum), this protein is Cyclic pyranopterin monophosphate synthase.